We begin with the raw amino-acid sequence, 581 residues long: Proline--tRNA ligase (581 aa).

The protein belongs to the class-II aminoacyl-tRNA synthetase family. ProS type 1 subfamily. In terms of assembly, homodimer.

It is found in the cytoplasm. It carries out the reaction tRNA(Pro) + L-proline + ATP = L-prolyl-tRNA(Pro) + AMP + diphosphate. Catalyzes the attachment of proline to tRNA(Pro) in a two-step reaction: proline is first activated by ATP to form Pro-AMP and then transferred to the acceptor end of tRNA(Pro). As ProRS can inadvertently accommodate and process non-cognate amino acids such as alanine and cysteine, to avoid such errors it has two additional distinct editing activities against alanine. One activity is designated as 'pretransfer' editing and involves the tRNA(Pro)-independent hydrolysis of activated Ala-AMP. The other activity is designated 'posttransfer' editing and involves deacylation of mischarged Ala-tRNA(Pro). The misacylated Cys-tRNA(Pro) is not edited by ProRS. In Polaromonas naphthalenivorans (strain CJ2), this protein is Proline--tRNA ligase.